Here is a 138-residue protein sequence, read N- to C-terminus: MATLQCRVVSAREELYSGEISMLIATGTEGEIGVLPGHTPLITLLKPGAMRVQTPDGEEEVIYVSGGVLEVQPKMVTVLADTAMRAHNLDESKIVEARKKAEQMLVNQSDTVQTNAALASLAESVAQLQTIRKYKNRA.

It belongs to the ATPase epsilon chain family. In terms of assembly, F-type ATPases have 2 components, CF(1) - the catalytic core - and CF(0) - the membrane proton channel. CF(1) has five subunits: alpha(3), beta(3), gamma(1), delta(1), epsilon(1). CF(0) has three main subunits: a, b and c.

It is found in the cell inner membrane. In terms of biological role, produces ATP from ADP in the presence of a proton gradient across the membrane. This is ATP synthase epsilon chain from Psychrobacter cryohalolentis (strain ATCC BAA-1226 / DSM 17306 / VKM B-2378 / K5).